Consider the following 199-residue polypeptide: Recombination protein RecR (199 aa).

Residues 56–71 (CQRCNTFTEGDICERC) form a C4-type zinc finger. Residues 79-174 (ELLCVVETPV…GVTRIARGVP (96 aa)) form the Toprim domain.

Belongs to the RecR family.

May play a role in DNA repair. It seems to be involved in an RecBC-independent recombinational process of DNA repair. It may act with RecF and RecO. The chain is Recombination protein RecR from Dechloromonas aromatica (strain RCB).